The following is a 574-amino-acid chain: Proline--tRNA ligase (574 aa).

Belongs to the class-II aminoacyl-tRNA synthetase family. ProS type 1 subfamily. Homodimer.

It is found in the cytoplasm. It carries out the reaction tRNA(Pro) + L-proline + ATP = L-prolyl-tRNA(Pro) + AMP + diphosphate. In terms of biological role, catalyzes the attachment of proline to tRNA(Pro) in a two-step reaction: proline is first activated by ATP to form Pro-AMP and then transferred to the acceptor end of tRNA(Pro). As ProRS can inadvertently accommodate and process non-cognate amino acids such as alanine and cysteine, to avoid such errors it has two additional distinct editing activities against alanine. One activity is designated as 'pretransfer' editing and involves the tRNA(Pro)-independent hydrolysis of activated Ala-AMP. The other activity is designated 'posttransfer' editing and involves deacylation of mischarged Ala-tRNA(Pro). The misacylated Cys-tRNA(Pro) is not edited by ProRS. This is Proline--tRNA ligase from Nitrosococcus oceani (strain ATCC 19707 / BCRC 17464 / JCM 30415 / NCIMB 11848 / C-107).